Consider the following 154-residue polypeptide: uncharacterized protein (154 aa).

It is found in the mitochondrion. This is an uncharacterized protein from Vicia faba (Broad bean).